The sequence spans 475 residues: MAAGPLRGLAVAGGGESSESEDDGWEIGYLDRTAQKLKGPLPVEERQETFKKALTSGNISLVEELLDSGISVDTSFQYGWTSLMYAASVSNVELVRVLLDRGANASFDKDKQTVLITACSARGSEEKILKCIELLLSRNADPNVACRRLMTPIMYAARDGHPQVVALLVAHGAEVNTQDENGYTALTWAARQGHKNVVLKLLELGANKMIQTKDGKTPSEIAKRNKHLEIFNFLSLTLNPLEGKLHQLTKEESISKLLRTDSDKEKDHIFSSYTAFGDLEIFLHGLGLEHMTDLLKEREITLRHLLTMRKDELAKNGITSRDQQKIMAALKELEVEEIKFGELPEVAKLEISGDEFLNFLLKLNKQCGHLIKAVQNIITELPVNSHKIVLEWASPRNFTSVCEELVSNVEDLSEEVCKLKDLIQKLQNERENDPTHIPLMEEVSTWNTRILKRTAITVCGFGVLLFICKLTFQKK.

The segment at 1-24 (MAAGPLRGLAVAGGGESSESEDDG) is disordered. Residues Ser-17, Ser-18, and Ser-20 each carry the phosphoserine modification. ANK repeat units lie at residues 45–74 (ERQE…SVDT), 78–107 (YGWT…NASF), 110–144 (DKQT…DPNV), 148–177 (RLMT…EVNT), 181–210 (NGYT…NKMI), and 214–243 (DGKT…PLEG). An SAM domain is found at 272–334 (SYTAFGDLEI…KIMAALKELE (63 aa)).

In terms of assembly, interacts with DDX4, PIWIL1, RANBP9 and TDRD1.

The protein resides in the cytoplasm. In terms of biological role, plays a central role during spermatogenesis by repressing transposable elements and preventing their mobilization, which is essential for the germline integrity. Acts via the piRNA metabolic process, which mediates the repression of transposable elements during meiosis by forming complexes composed of piRNAs and Piwi proteins and governs the methylation and subsequent repression of transposons. Its association with pi-bodies suggests a participation in the primary piRNAs metabolic process. Required prior to the pachytene stage to facilitate the production of multiple types of piRNAs, including those associated with repeats involved in the regulation of retrotransposons. May act by mediating protein-protein interactions during germ cell maturation. The polypeptide is Ankyrin repeat, SAM and basic leucine zipper domain-containing protein 1 (ASZ1) (Ovis aries (Sheep)).